Here is a 142-residue protein sequence, read N- to C-terminus: Large ribosomal subunit protein uL11 (142 aa).

Belongs to the universal ribosomal protein uL11 family. Part of the ribosomal stalk of the 50S ribosomal subunit. Interacts with L10 and the large rRNA to form the base of the stalk. L10 forms an elongated spine to which L12 dimers bind in a sequential fashion forming a multimeric L10(L12)X complex. Post-translationally, one or more lysine residues are methylated.

Its function is as follows. Forms part of the ribosomal stalk which helps the ribosome interact with GTP-bound translation factors. This is Large ribosomal subunit protein uL11 from Xanthomonas oryzae pv. oryzae (strain MAFF 311018).